Consider the following 489-residue polypeptide: Coronin-1B (489 aa).

Ser2 carries the phosphoserine modification. 5 WD repeats span residues 80–120, 130–170, 174–213, 217–260, and 265–305; these read GHTG…LTSP, GHTK…ELYR, LHPD…LVAE, AHEG…EPMA, and DSSN…PYIH. Positions 414 to 443 are disordered; that stretch reads DSRPAMAPGSSRLGAPASTTAAADATPSGS. Positions 427-443 are enriched in low complexity; sequence GAPASTTAAADATPSGS. The stretch at 449–474 forms a coiled coil; the sequence is EAGKLEEVMQELRALRALVKEQGERI.

Belongs to the WD repeat coronin family. As to quaternary structure, forms homooligomers, but does not form complexes with the other coronins. Interacts with Arp2/3 complex components, including ACTR2, ARPC1B and ARPC2. Binds actin. Post-translationally, phosphorylation on Ser-2 regulates the interaction with the Arp2/3 complex and cell motility in fibroblasts. Phosphorylation does not seem to affect subcellular location.

It is found in the cytoplasm. The protein resides in the cytoskeleton. Its subcellular location is the stress fiber. Functionally, regulates leading edge dynamics and cell motility in fibroblasts. May be involved in cytokinesis and signal transduction. The protein is Coronin-1B (CORO1B) of Pongo abelii (Sumatran orangutan).